We begin with the raw amino-acid sequence, 655 residues long: p-hydroxybenzoic acid efflux pump subunit AaeB (655 aa).

11 consecutive transmembrane segments (helical) span residues 13–33 (FAVK…HFQL), 38–58 (WAVL…GGEP), 69–89 (LRII…ISMI), 93–113 (LLMI…SSLV), 121–141 (WGLS…EPLL), 152–172 (EIVI…PRSI), 370–390 (LFWL…IAVV), 407–427 (FIYG…VIIP), 431–451 (QSML…GIEV), 459–479 (MGAL…TFHF), and 482–502 (FLDS…VILL).

The protein belongs to the aromatic acid exporter ArAE (TC 2.A.85) family.

It is found in the cell inner membrane. Forms an efflux pump with AaeA. Could function as a metabolic relief valve, allowing to eliminate certain compounds when they accumulate to high levels in the cell. This is p-hydroxybenzoic acid efflux pump subunit AaeB from Salmonella heidelberg (strain SL476).